We begin with the raw amino-acid sequence, 343 residues long: Probable fructokinase-7 (343 aa).

Residue glycine 2 is modified to N-acetylglycine.

The protein belongs to the carbohydrate kinase PfkB family.

It carries out the reaction D-fructose + ATP = D-fructose 6-phosphate + ADP + H(+). The protein operates within glycan biosynthesis; starch biosynthesis. In terms of biological role, may play an important role in maintaining the flux of carbon towards starch formation. This Arabidopsis thaliana (Mouse-ear cress) protein is Probable fructokinase-7.